The primary structure comprises 240 residues: Bactofilin BacP (240 aa).

The tract at residues 116–240 (DVEPGRLPAE…KKVVVKKKTR (125 aa)) is interacts with PadC. The tract at residues 117 to 240 (VEPGRLPAER…KKVVVKKKTR (124 aa)) is disordered. Positions 126–150 (RPAVVRPTAVTRPTATPARPTIPAA) are enriched in low complexity. Residues 151–173 (RPMPPPPPSRPTPPPPPARPSAP) show a composition bias toward pro residues. Basic residues predominate over residues 229 to 240 (AKKKVVVKKKTR).

Belongs to the bactofilin family. In terms of assembly, interacts with BacN and probably also BacO, the 3 proteins colocalize as an extended structure. Interacts with PadC.

The protein resides in the cytoplasm. It is found in the cytoskeleton. In terms of biological role, a non-essential component of the chromosome segregation machinery. Positions the ParA-ParB-parS chromosome segregation machinery within the cell; BacP seems to be the most important bactofilin in this process. Forms a heteropolymeric, subpolar scaffold in the cell; BacP probably forms the core, BacO contributes to position and integrity while BacN does not seem to contribute to assembly. The chain is Bactofilin BacP from Myxococcus xanthus (strain DK1622).